The chain runs to 323 residues: Galectin-4 (323 aa).

Galectin domains follow at residues tyrosine 19 to isoleucine 150 and tyrosine 194 to isoleucine 323. Tryptophan 256–lysine 262 is an a beta-D-galactoside binding site. Serine 258 is subject to Phosphoserine.

In terms of assembly, monomer.

In terms of biological role, galectin that binds lactose and a related range of sugars. May be involved in the assembly of adherens junctions. The protein is Galectin-4 (LGALS4) of Homo sapiens (Human).